The following is a 541-amino-acid chain: ATP synthase subunit alpha (541 aa).

Residue 173 to 180 (GDRQTGKT) coordinates ATP. Residues 517-527 (GIEPGVEEHES) are compositionally biased toward basic and acidic residues. Residues 517–541 (GIEPGVEEHESLGATAVNQETIVKK) form a disordered region. Over residues 532 to 541 (AVNQETIVKK) the composition is skewed to polar residues.

Belongs to the ATPase alpha/beta chains family. As to quaternary structure, F-type ATPases have 2 components, CF(1) - the catalytic core - and CF(0) - the membrane proton channel. CF(1) has five subunits: alpha(3), beta(3), gamma(1), delta(1), epsilon(1). CF(0) has three main subunits: a(1), b(2) and c(9-12). The alpha and beta chains form an alternating ring which encloses part of the gamma chain. CF(1) is attached to CF(0) by a central stalk formed by the gamma and epsilon chains, while a peripheral stalk is formed by the delta and b chains.

Its subcellular location is the cell membrane. It catalyses the reaction ATP + H2O + 4 H(+)(in) = ADP + phosphate + 5 H(+)(out). Functionally, produces ATP from ADP in the presence of a proton gradient across the membrane. The alpha chain is a regulatory subunit. This is ATP synthase subunit alpha from Kocuria rhizophila (strain ATCC 9341 / DSM 348 / NBRC 103217 / DC2201).